The sequence spans 65 residues: Large ribosomal subunit protein bL35 (65 aa).

The disordered stretch occupies residues 1 to 52 (MPKIKTNRGAAKRFKRTGSGGFKCVQSHRRHILTKKSTKRKRQLRSPDMVHP). Basic residues predominate over residues 26-44 (QSHRRHILTKKSTKRKRQL).

Belongs to the bacterial ribosomal protein bL35 family.

The chain is Large ribosomal subunit protein bL35 from Methylococcus capsulatus (strain ATCC 33009 / NCIMB 11132 / Bath).